A 240-amino-acid chain; its full sequence is PF03932 family protein CutC (240 aa).

This sequence belongs to the CutC family.

It is found in the cytoplasm. The chain is PF03932 family protein CutC from Xanthomonas axonopodis pv. citri (strain 306).